The primary structure comprises 164 residues: Small ribosomal subunit protein uS5 (164 aa).

The region spanning Leu10 to Val73 is the S5 DRBM domain.

It belongs to the universal ribosomal protein uS5 family. As to quaternary structure, part of the 30S ribosomal subunit. Contacts proteins S4 and S8.

Functionally, with S4 and S12 plays an important role in translational accuracy. Located at the back of the 30S subunit body where it stabilizes the conformation of the head with respect to the body. This chain is Small ribosomal subunit protein uS5, found in Streptococcus gordonii (strain Challis / ATCC 35105 / BCRC 15272 / CH1 / DL1 / V288).